The chain runs to 405 residues: MATEMALVKPISKFSTSSPIFSNSRYGKFTTVRMSSTSQSTTKAAAKGGKKAAKTAIKETLLTPRFYTTDFDEMEALFNTEINKNLNQSEFESLLQEFKTDYNQTHFVRNKEFKEAADKIDGPLRQIFVEFSERSCTAEFSGFLLYKELGRRLKKTNPVVAEIFSLMSRDEARHAGFLNKGLSDFNLALDLGFLTKARKYTFFKPKFIFYATYLSEKIGYWRYITIYRHLKENPEYQCYPIFKYFENWCQDENRHGDFFSALLKAQPQFLNDWKAKLWSRFFCLSVYVTMYLNDCQRTAFYEGIGLDTKEFDMHVIIETNRTTARIFPAVLDVENPEFKRRLDKMVEINEQLLAVGETSDIPLVKNLKRIPLIAALASELLATYLMPPIESGSVDFAEFEPQLVY.

A chloroplast-targeting transit peptide spans 1 to 43; sequence MATEMALVKPISKFSTSSPIFSNSRYGKFTTVRMSSTSQSTTK.

It belongs to the AcsF family. Fe cation serves as cofactor.

The protein resides in the plastid. It is found in the chloroplast. The enzyme catalyses Mg-protoporphyrin IX 13-monomethyl ester + 3 NADPH + 3 O2 + 2 H(+) = 3,8-divinyl protochlorophyllide a + 3 NADP(+) + 5 H2O. The protein operates within porphyrin-containing compound metabolism; chlorophyll biosynthesis. Functionally, catalyzes the formation of the isocyclic ring in chlorophyll biosynthesis. Mediates the cyclase reaction, which results in the formation of divinylprotochlorophyllide (Pchlide) characteristic of all chlorophylls from magnesium-protoporphyrin IX 13-monomethyl ester (MgPMME). In Gossypium hirsutum (Upland cotton), this protein is Magnesium-protoporphyrin IX monomethyl ester [oxidative] cyclase, chloroplastic (CRD1).